The primary structure comprises 364 residues: Fructose-1,6-bisphosphatase class 1 2 (364 aa).

4 residues coordinate Mg(2+): glutamate 101, aspartate 123, leucine 125, and aspartate 126. Substrate contacts are provided by residues aspartate 126–serine 129 and asparagine 218. Position 290 (glutamate 290) interacts with Mg(2+).

The protein belongs to the FBPase class 1 family. In terms of assembly, homotetramer. The cofactor is Mg(2+).

The protein localises to the cytoplasm. It carries out the reaction beta-D-fructose 1,6-bisphosphate + H2O = beta-D-fructose 6-phosphate + phosphate. The protein operates within carbohydrate biosynthesis; gluconeogenesis. In Cupriavidus necator (strain ATCC 17699 / DSM 428 / KCTC 22496 / NCIMB 10442 / H16 / Stanier 337) (Ralstonia eutropha), this protein is Fructose-1,6-bisphosphatase class 1 2.